The following is a 113-amino-acid chain: UPF0482 protein YnfB (113 aa).

The signal sequence occupies residues 1 to 28 (MKITLSKRIDLLAFLLPCALALSTTVHA).

The protein belongs to the UPF0482 family.

The polypeptide is UPF0482 protein YnfB (Escherichia coli O157:H7).